The sequence spans 115 residues: Con-Ins T1B (115 aa).

Positions 1–24 (MTTSFYFLLMALGLLLYVCQSSFG) are cleaved as a signal peptide. Positions 25–29 (NQHTR) are excised as a propeptide. Proline 34 is subject to 4-hydroxyproline; partial. Disulfide bonds link cysteine 38/cysteine 101, cysteine 50/cysteine 114, and cysteine 100/cysteine 105. A propeptide spans 52 to 94 (RKRNDAGKKRGQASPLWQRGGSLSMLKARAKRNEAFHLQRAHR) (c peptide). At glutamate 98 the chain carries 4-carboxyglutamate. Proline 104 is subject to 4-hydroxyproline; partial. A 4-carboxyglutamate; partial modification is found at glutamate 109. Cysteine amide is present on cysteine 114.

Belongs to the insulin family. As to quaternary structure, heterodimer of A and B chains; disulfide-linked. As to expression, expressed by the venom gland.

It is found in the secreted. Its function is as follows. This venom insulin, from a fish-hunting cone snail, facilitates prey capture by rapidly inducing hypoglycemic shock. It is one of the smallest known insulin found in nature and lacks the C-terminal segment of the B chain that, in human insulin, mediates engagement of the insulin receptor (INSR) and assembly of the hormone's hexameric storage form. Despite lacking this segment, it both binds and activates human insulin receptor (long isoform (HIR-B) of INSR) with a high potency (EC(50)=12.0 nM). In vivo, intraperitoneal injection of this peptide into zebrafish lowers blood glucose with a lower potency than human insulin. In addition, when applied to water, this peptide reduces overall locomotor activity of zebrafish larvae, observed as a significant decrease in the percentage of time spent swimming and movement frequency. When tested on a mouse model of diabetes, this insulin also lowers blood glucose with a 10-fold lower potency than human insulin. The polypeptide is Con-Ins T1B (Conus tulipa (Fish-hunting cone snail)).